We begin with the raw amino-acid sequence, 90 residues long: Protein LIM1 (90 aa).

A signal peptide spans 1–26; it reads MASMKSLATAILVVLLLAALSREGRS. Intrachain disulfides connect C29–C66, C39–C55, C56–C81, and C68–C88.

The protein belongs to the A9/FIL1 family.

The protein localises to the secreted. This Lilium longiflorum (Trumpet lily) protein is Protein LIM1 (LIM1).